We begin with the raw amino-acid sequence, 297 residues long: Acetaldehyde dehydrogenase (297 aa).

Position 15 to 18 (15 to 18 (SGSI)) interacts with NAD(+). Catalysis depends on Cys-130, which acts as the Acyl-thioester intermediate. Residues 162-170 (SAGIATREN) and Asn-272 each bind NAD(+).

It belongs to the acetaldehyde dehydrogenase family.

It carries out the reaction acetaldehyde + NAD(+) + CoA = acetyl-CoA + NADH + H(+). This Burkholderia thailandensis (strain ATCC 700388 / DSM 13276 / CCUG 48851 / CIP 106301 / E264) protein is Acetaldehyde dehydrogenase (mhpF).